The primary structure comprises 433 residues: tRNA-2-methylthio-N(6)-dimethylallyladenosine synthase (433 aa).

The 116-residue stretch at 3 to 118 (KKLFIQTLGC…ISTAVKTPKF (116 aa)) folds into the MTTase N-terminal domain. Positions 12, 49, 81, 150, 154, and 157 each coordinate [4Fe-4S] cluster. The region spanning 136 to 369 (RGSPYKSHIN…QSRHNEILDE (234 aa)) is the Radical SAM core domain. The 62-residue stretch at 372-433 (AAQEGKILDV…RMVLYGELAN (62 aa)) folds into the TRAM domain.

This sequence belongs to the methylthiotransferase family. MiaB subfamily. As to quaternary structure, monomer. It depends on [4Fe-4S] cluster as a cofactor.

The protein resides in the cytoplasm. It carries out the reaction N(6)-dimethylallyladenosine(37) in tRNA + (sulfur carrier)-SH + AH2 + 2 S-adenosyl-L-methionine = 2-methylsulfanyl-N(6)-dimethylallyladenosine(37) in tRNA + (sulfur carrier)-H + 5'-deoxyadenosine + L-methionine + A + S-adenosyl-L-homocysteine + 2 H(+). Its function is as follows. Catalyzes the methylthiolation of N6-(dimethylallyl)adenosine (i(6)A), leading to the formation of 2-methylthio-N6-(dimethylallyl)adenosine (ms(2)i(6)A) at position 37 in tRNAs that read codons beginning with uridine. In Campylobacter curvus (strain 525.92), this protein is tRNA-2-methylthio-N(6)-dimethylallyladenosine synthase.